Consider the following 148-residue polypeptide: Deoxyuridine 5'-triphosphate nucleotidohydrolase (148 aa).

Substrate contacts are provided by residues 67–69, N80, 84–86, and M94; these read RSG and LID.

This sequence belongs to the dUTPase family. It depends on Mg(2+) as a cofactor.

It catalyses the reaction dUTP + H2O = dUMP + diphosphate + H(+). It functions in the pathway pyrimidine metabolism; dUMP biosynthesis; dUMP from dCTP (dUTP route): step 2/2. In terms of biological role, this enzyme is involved in nucleotide metabolism: it produces dUMP, the immediate precursor of thymidine nucleotides and it decreases the intracellular concentration of dUTP so that uracil cannot be incorporated into DNA. This is Deoxyuridine 5'-triphosphate nucleotidohydrolase from Francisella philomiragia subsp. philomiragia (strain ATCC 25017 / CCUG 19701 / FSC 153 / O#319-036).